Reading from the N-terminus, the 694-residue chain is Lon-like protease BrxL (694 aa).

This sequence belongs to the BrxL family.

In terms of biological role, BREX systems (bacteriophage exclusion) provide immunity against bacteriophage. Part of a type 1 BREX system which protects against dsDNA phage. This system allows phage adsorption but prevents phage DNA replication, without degradation of the phage DNA. Methylation of bacterial DNA by PglX guides self/non-self discrimination. When the brxA-brxB-brxC-pglX-pglZ-brxL genes are transformed into a susceptible E.coli strain (BW25113) they confer very high resistance to infection by bacteriophage VR7 and VpaE1, about 100-fold protection against lambda, T5 and T7 and no protection against RNA phage Qbeta, ssDNA phage M13 or dSDNA phage T4 and VR5. Glycosylated phage DNA is not susceptible to BREX. The BREX system does not confer resistance to lysogenic lambda phage, i.e. prophage that are integrated into the chromosomal DNA and then induced to form phage. Expression of this protein alone is toxic. In Escherichia coli O9:H4 (strain HS), this protein is Lon-like protease BrxL.